A 226-amino-acid chain; its full sequence is Translation initiation factor IF-3 (226 aa).

The disordered stretch occupies residues 195–226 (FVPLAPLSPEDLIEEPELESESDSDAEPESDN). Residues 205–226 (DLIEEPELESESDSDAEPESDN) are compositionally biased toward acidic residues.

It belongs to the IF-3 family. As to quaternary structure, monomer.

The protein resides in the cytoplasm. IF-3 binds to the 30S ribosomal subunit and shifts the equilibrium between 70S ribosomes and their 50S and 30S subunits in favor of the free subunits, thus enhancing the availability of 30S subunits on which protein synthesis initiation begins. This Chlorobium chlorochromatii (strain CaD3) protein is Translation initiation factor IF-3.